The primary structure comprises 245 residues: Uridylate kinase (245 aa).

12 to 15 contributes to the ATP binding site; sequence KLSG. Residues 20–25 form an involved in allosteric activation by GTP region; it reads GEKGVG. Glycine 54 serves as a coordination point for UMP. The ATP site is built by glycine 55 and arginine 59. UMP is bound by residues aspartate 74 and 135 to 142; that span reads VGSPYFST. 3 residues coordinate ATP: asparagine 163, tyrosine 169, and aspartate 172.

It belongs to the UMP kinase family. In terms of assembly, homohexamer.

It is found in the cytoplasm. The catalysed reaction is UMP + ATP = UDP + ADP. The protein operates within pyrimidine metabolism; CTP biosynthesis via de novo pathway; UDP from UMP (UMPK route): step 1/1. With respect to regulation, allosterically activated by GTP. Inhibited by UTP. Functionally, catalyzes the reversible phosphorylation of UMP to UDP. This chain is Uridylate kinase, found in Streptococcus mutans serotype c (strain ATCC 700610 / UA159).